Reading from the N-terminus, the 587-residue chain is MTSSIECQNFLRSLQLLNLLIKIGVQNLILCPGSRSAPLAIAAGELNKLGMVNIFNSIDERSAGFHSLGISAASGNLSLVITTSGTAVSNLLPAAVEADRSCKGVIFLTADRPLRLKDCGANQTVNQEDFLSSVCRSVLSTNLNGLHETQENEILNLVRITEKQISTFPGPIHLNIPIDKPLDISFLNKKNVLEVFKRIYLKKQYVFQKVEIKSDKNKFLEISKIFNLDESGIILVGPYQGSVNDLSSFNKSLEQLQEITGWPVFADPVSGVYSDLRGLVVNWELVLRKHKNLIKCKQLLRLGPMSSSIDLENFLIKFEGIQILIKEKNYRKLDPIKKSFEYDFGLLNFTSILLEELSFNEKNKKSLTPLALDLIEEGKQIKDILKDEIIIDNKITEYKLANLVPKLWPAEHPIMLSASSPIRDWLTFSENGTLTRNCFSFRGASGIDGTLSLALGISRIKNPLLLVTGDLAFVHDINGWLIENSVDMNLTILLIDNNGGNIFNRIYKKNLKEDEFKKLFLMPKEINWSKLSESYQVKFKSVSNFKKLREAFDWSISIQKSVIIKVDIDPENEIYEKNALLEKIIGS.

This sequence belongs to the TPP enzyme family. MenD subfamily. In terms of assembly, homodimer. Requires Mg(2+) as cofactor. The cofactor is Mn(2+). It depends on thiamine diphosphate as a cofactor.

The enzyme catalyses isochorismate + 2-oxoglutarate + H(+) = 5-enolpyruvoyl-6-hydroxy-2-succinyl-cyclohex-3-ene-1-carboxylate + CO2. It participates in quinol/quinone metabolism; 1,4-dihydroxy-2-naphthoate biosynthesis; 1,4-dihydroxy-2-naphthoate from chorismate: step 2/7. The protein operates within cofactor biosynthesis; phylloquinone biosynthesis. In terms of biological role, catalyzes the thiamine diphosphate-dependent decarboxylation of 2-oxoglutarate and the subsequent addition of the resulting succinic semialdehyde-thiamine pyrophosphate anion to isochorismate to yield 2-succinyl-5-enolpyruvyl-6-hydroxy-3-cyclohexene-1-carboxylate (SEPHCHC). The sequence is that of 2-succinyl-5-enolpyruvyl-6-hydroxy-3-cyclohexene-1-carboxylate synthase from Prochlorococcus marinus (strain MIT 9301).